Reading from the N-terminus, the 208-residue chain is UPF0637 protein BCQ_3749 (208 aa).

Belongs to the UPF0637 family.

The protein is UPF0637 protein BCQ_3749 of Bacillus cereus (strain Q1).